A 272-amino-acid polypeptide reads, in one-letter code: Arylesterase (272 aa).

The region spanning 21–253 (KPVLFSHGWL…LKVYKDAPHG (233 aa)) is the AB hydrolase-1 domain. W29 lines the acetate pocket. The active site involves S95. M96 lines the acetate pocket. Catalysis depends on residues D223 and H252.

It belongs to the AB hydrolase superfamily. Bacterial non-heme haloperoxidase / perhydrolase family. As to quaternary structure, dimer of trimers.

The catalysed reaction is a phenyl acetate + H2O = a phenol + acetate + H(+). It catalyses the reaction peracetic acid + H2O = acetate + H2O2 + H(+). It carries out the reaction a percarboxylic acid + H2O = a carboxylate + H2O2 + H(+). Hydrolyzes phenolic esters, such as phenyl acetate, nitrophenyl acetate and naphtyl acetate. Can act on a wide range of esters, but reaction rate and enantioselectivity differ significantly depending on the substrate. Shows a preference for esters with small acyl groups. Also shows low perhydrolase activity, and catalyzes the reversible formation of peroxycarboxylic acids from carboxylic acids and hydrogen peroxide. In vitro, enzyme-generated peracetic acid oxidizes bromide ion to bromonium, which reacts with monochlorodimedone to form bromochlorodimedone. This Pseudomonas fluorescens protein is Arylesterase.